A 125-amino-acid polypeptide reads, in one-letter code: Fluoride-specific ion channel FluC (125 aa).

4 helical membrane passes run 4–24 (IALVATGGAIGSVFRYLVGVW), 35–55 (WGTLAVNIVGSFLIGLLVELV), 68–88 (FLVTGVLGGFTTFSSFSLDAV), and 100–120 (AFYILASLVVSIAAVFAGLAL). The Na(+) site is built by Gly-75 and Thr-78.

The protein belongs to the fluoride channel Fluc/FEX (TC 1.A.43) family.

It localises to the cell inner membrane. It carries out the reaction fluoride(in) = fluoride(out). With respect to regulation, na(+) is not transported, but it plays an essential structural role and its presence is essential for fluoride channel function. Its function is as follows. Fluoride-specific ion channel. Important for reducing fluoride concentration in the cell, thus reducing its toxicity. In Agrobacterium fabrum (strain C58 / ATCC 33970) (Agrobacterium tumefaciens (strain C58)), this protein is Fluoride-specific ion channel FluC.